The sequence spans 319 residues: MSSFKPSRFSTARLTGDAVTPKSIYLRRREFMIGLGAIAATGAASSAFADPLEAKTTAYKVDEKLTPQNAVTTYNNFYEFGTDKSDPSANSGSFKPLPWKLTVDGLVKQPKEFDVEELIAKMPLEERIYRMRCVEAWSMVIPWIGFPLSSLLSQVEPLGSAKYIAFTGVVRPDEMPGQTGLFQALNWPYVEGLRLDEAMHPLTILSVGLYGETLPNANGAPIRLVVPWKYGFKGIKAITRISFVEKQPPTSWNRQAANEYGFYANVNPAVDHPRWSQATERRIGEGGFFGSDRRPTLPFNGYGEEVASLYAGMDLKANY.

The tat-type signal signal peptide spans 1-54 (MSSFKPSRFSTARLTGDAVTPKSIYLRRREFMIGLGAIAATGAASSAFADPLEA). Residues asparagine 75, 78–79 (YE), cysteine 133, asparagine 218, arginine 223, and 234–236 (GIK) contribute to the Mo-molybdopterin site.

Belongs to the MsrP family. As to quaternary structure, heterodimer of a catalytic subunit (MsrP) and a heme-binding subunit (MsrQ). The cofactor is Mo-molybdopterin. Predicted to be exported by the Tat system. The position of the signal peptide cleavage has not been experimentally proven.

The protein resides in the periplasm. It carries out the reaction L-methionyl-[protein] + a quinone + H2O = L-methionyl-(S)-S-oxide-[protein] + a quinol. It catalyses the reaction L-methionyl-[protein] + a quinone + H2O = L-methionyl-(R)-S-oxide-[protein] + a quinol. In terms of biological role, part of the MsrPQ system that repairs oxidized periplasmic proteins containing methionine sulfoxide residues (Met-O), using respiratory chain electrons. Thus protects these proteins from oxidative-stress damage caused by reactive species of oxygen and chlorine generated by the host defense mechanisms. MsrPQ is essential for the maintenance of envelope integrity under bleach stress, rescuing a wide series of structurally unrelated periplasmic proteins from methionine oxidation. The catalytic subunit MsrP is non-stereospecific, being able to reduce both (R-) and (S-) diastereoisomers of methionine sulfoxide. This is Protein-methionine-sulfoxide reductase catalytic subunit MsrP from Brucella melitensis biotype 1 (strain ATCC 23456 / CCUG 17765 / NCTC 10094 / 16M).